The sequence spans 251 residues: Malonyl-[acyl-carrier protein] O-methyltransferase (251 aa).

Belongs to the methyltransferase superfamily.

It catalyses the reaction malonyl-[ACP] + S-adenosyl-L-methionine = malonyl-[ACP] methyl ester + S-adenosyl-L-homocysteine. The protein operates within cofactor biosynthesis; biotin biosynthesis. In terms of biological role, converts the free carboxyl group of a malonyl-thioester to its methyl ester by transfer of a methyl group from S-adenosyl-L-methionine (SAM). It allows to synthesize pimeloyl-ACP via the fatty acid synthetic pathway. In Erwinia billingiae (strain Eb661), this protein is Malonyl-[acyl-carrier protein] O-methyltransferase.